The primary structure comprises 510 residues: Histidine ammonia-lyase (510 aa).

The 5-imidazolinone (Ala-Gly) cross-link spans Ala-143–Gly-145. Ser-144 carries the 2,3-didehydroalanine (Ser) modification.

It belongs to the PAL/histidase family. In terms of processing, contains an active site 4-methylidene-imidazol-5-one (MIO), which is formed autocatalytically by cyclization and dehydration of residues Ala-Ser-Gly.

The protein resides in the cytoplasm. It catalyses the reaction L-histidine = trans-urocanate + NH4(+). It participates in amino-acid degradation; L-histidine degradation into L-glutamate; N-formimidoyl-L-glutamate from L-histidine: step 1/3. This Shewanella piezotolerans (strain WP3 / JCM 13877) protein is Histidine ammonia-lyase.